A 176-amino-acid polypeptide reads, in one-letter code: Inner membrane-spanning protein YciB (176 aa).

Transmembrane regions (helical) follow at residues 24–44 (TATAVAIVATLVQIAWVAFRH), 49–69 (PMLWVSLGVVTVFGGATLVLH), 76–96 (WKPTVLYWAFSVALIVSQLAF), 119–139 (LNVVWGVFFVLLGLVNLFVAY), and 149–169 (FKLFGATGCLVVFIVGQSLWL).

Belongs to the YciB family.

The protein localises to the cell inner membrane. Functionally, plays a role in cell envelope biogenesis, maintenance of cell envelope integrity and membrane homeostasis. The polypeptide is Inner membrane-spanning protein YciB (Paraburkholderia xenovorans (strain LB400)).